We begin with the raw amino-acid sequence, 1166 residues long: ATP-dependent helicase/deoxyribonuclease subunit B (1166 aa).

In terms of domain architecture, UvrD-like helicase ATP-binding spans methionine 1–arginine 285. Position 8 to 15 (glycine 8 to threonine 15) interacts with ATP. Residues glutamate 279–aspartate 586 form the UvrD-like helicase C-terminal domain. Cysteine 801, cysteine 1121, cysteine 1124, and cysteine 1130 together coordinate [4Fe-4S] cluster.

It belongs to the helicase family. AddB/RexB type 1 subfamily. Heterodimer of AddA and AddB. Requires Mg(2+) as cofactor. [4Fe-4S] cluster is required as a cofactor.

Functionally, the heterodimer acts as both an ATP-dependent DNA helicase and an ATP-dependent, dual-direction single-stranded exonuclease. Recognizes the chi site generating a DNA molecule suitable for the initiation of homologous recombination. The AddB subunit has 5' -&gt; 3' nuclease activity but not helicase activity. The polypeptide is ATP-dependent helicase/deoxyribonuclease subunit B (Bacillus licheniformis (strain ATCC 14580 / DSM 13 / JCM 2505 / CCUG 7422 / NBRC 12200 / NCIMB 9375 / NCTC 10341 / NRRL NRS-1264 / Gibson 46)).